The primary structure comprises 615 residues: MNKKPTRNKKPVDQRSKINIKSYLKEVQVGVKDGVFIYTDPLSIDQFAKKVNQPVAKIIKHFFSKGINTINLNTILSLEQIGELCLDLGLDFKIEKSVTSENLLDNIEFKDKKEDLVKRPPIVTVMGHVDHGKTSLLDAIRSTNVTSNEAGGITQHIGAYQVKKNDELITFIDTPGHEAFTEMRARGANLTDIVVLVVAGDDGIKPQTEEAIDHAKNANVPIIVFVNKMDKSGANFDRVIQQISKYDLSPEEYGGDTIFVQGSAIKKEGINELLDAILTLAEINEYKANPNADPYGIVIESKLEPGLGPQATVIIKRGTLKVGDYICIGAAYGKVRIMQDENGNNLTEATPSRPVKISGLDAIPQAGEKFLGLATEKEVKELSDSYKLKQQKQKHLSLQESHEKRTRINTNGIKCVDLIIKSDVQGSLEAIKYAISNINIEGVTTNIIRASTGVISETDIKLAQASNSTVISFNLGVSKQIRDLANSDNVQILSYEIIYKMVEDLEKIMKGELDPVYEESVIGQAVVRVLWKHSKIGTIAGSYVTSGKVVKNALCRVLRDDVIIYKSKIASLKSKTTFVDKVEHNKECGIVVENYNDIKEDDIIEVYEIVKKRVY.

Positions 118-285 (KRPPIVTVMG…AILTLAEINE (168 aa)) constitute a tr-type G domain. The tract at residues 127-134 (GHVDHGKT) is G1. 127-134 (GHVDHGKT) lines the GTP pocket. The tract at residues 152–156 (GITQH) is G2. Positions 173 to 176 (DTPG) are G3. GTP-binding positions include 173 to 177 (DTPGH) and 227 to 230 (NKMD). The tract at residues 227–230 (NKMD) is G4. A G5 region spans residues 263–265 (SAI).

The protein belongs to the TRAFAC class translation factor GTPase superfamily. Classic translation factor GTPase family. IF-2 subfamily.

The protein localises to the cytoplasm. In terms of biological role, one of the essential components for the initiation of protein synthesis. Protects formylmethionyl-tRNA from spontaneous hydrolysis and promotes its binding to the 30S ribosomal subunits. Also involved in the hydrolysis of GTP during the formation of the 70S ribosomal complex. This chain is Translation initiation factor IF-2, found in Mycoplasmoides gallisepticum (strain R(low / passage 15 / clone 2)) (Mycoplasma gallisepticum).